Consider the following 158-residue polypeptide: 6,7-dimethyl-8-ribityllumazine synthase (158 aa).

5-amino-6-(D-ribitylamino)uracil contacts are provided by residues Phe22, 57–59, and 81–83; these read AVE and AVI. 86-87 contributes to the (2S)-2-hydroxy-3-oxobutyl phosphate binding site; sequence GT. His89 functions as the Proton donor in the catalytic mechanism. Phe114 serves as a coordination point for 5-amino-6-(D-ribitylamino)uracil. Arg128 is a (2S)-2-hydroxy-3-oxobutyl phosphate binding site.

The protein belongs to the DMRL synthase family. Forms an icosahedral capsid composed of 60 subunits, arranged as a dodecamer of pentamers.

The catalysed reaction is (2S)-2-hydroxy-3-oxobutyl phosphate + 5-amino-6-(D-ribitylamino)uracil = 6,7-dimethyl-8-(1-D-ribityl)lumazine + phosphate + 2 H2O + H(+). The protein operates within cofactor biosynthesis; riboflavin biosynthesis; riboflavin from 2-hydroxy-3-oxobutyl phosphate and 5-amino-6-(D-ribitylamino)uracil: step 1/2. In terms of biological role, catalyzes the formation of 6,7-dimethyl-8-ribityllumazine by condensation of 5-amino-6-(D-ribitylamino)uracil with 3,4-dihydroxy-2-butanone 4-phosphate. This is the penultimate step in the biosynthesis of riboflavin. This is 6,7-dimethyl-8-ribityllumazine synthase from Shewanella putrefaciens (strain CN-32 / ATCC BAA-453).